The following is a 115-amino-acid chain: NADH-ubiquinone oxidoreductase chain 3 (115 aa).

3 helical membrane passes run 4–24 (MLAMLINITLSLCLISLAFWL), 55–75 (FFLVGITFLLLDLEIALLLPL), and 84–104 (MITTTIVSLSLVSILALGLSY).

It belongs to the complex I subunit 3 family. In terms of assembly, core subunit of respiratory chain NADH dehydrogenase (Complex I) which is composed of 45 different subunits. Interacts with TMEM186. Interacts with TMEM242.

Its subcellular location is the mitochondrion inner membrane. The enzyme catalyses a ubiquinone + NADH + 5 H(+)(in) = a ubiquinol + NAD(+) + 4 H(+)(out). Its function is as follows. Core subunit of the mitochondrial membrane respiratory chain NADH dehydrogenase (Complex I) which catalyzes electron transfer from NADH through the respiratory chain, using ubiquinone as an electron acceptor. Essential for the catalytic activity of complex I. This Reithrodon auritus (Bunny rat) protein is NADH-ubiquinone oxidoreductase chain 3.